We begin with the raw amino-acid sequence, 266 residues long: Interleukin-1 beta (266 aa).

Positions 1-114 (MAAVPELSSE…DTWDEEYESD (114 aa)) are excised as a propeptide.

This sequence belongs to the IL-1 family. As to quaternary structure, monomer. In its precursor form, weakly interacts with full-length MEFV; the mature cytokine does not interact at all. Interacts with integrins ITGAV:ITGBV and ITGA5:ITGB1; integrin-binding is required for IL1B signaling. Interacts with cargo receptor TMED10; the interaction is direct and is required for the secretion of IL1B mature form. Interacts with HSP90AB1; the interaction facilitates cargo translocation into the ERGIC. Interacts with HSP90B1; the interaction facilitates cargo translocation into the ERGIC.

It localises to the cytoplasm. Its subcellular location is the cytosol. It is found in the secreted. The protein resides in the lysosome. The protein localises to the extracellular exosome. Its function is as follows. Potent pro-inflammatory cytokine. Initially discovered as the major endogenous pyrogen, induces prostaglandin synthesis, neutrophil influx and activation, T-cell activation and cytokine production, B-cell activation and antibody production, and fibroblast proliferation and collagen production. Promotes Th17 differentiation of T-cells. Synergizes with IL12/interleukin-12 to induce IFNG synthesis from T-helper 1 (Th1) cells. Plays a role in angiogenesis by inducing VEGF production synergistically with TNF and IL6. Involved in transduction of inflammation downstream of pyroptosis: its mature form is specifically released in the extracellular milieu by passing through the gasdermin-D (GSDMD) pore. This chain is Interleukin-1 beta (IL1B), found in Cavia porcellus (Guinea pig).